Reading from the N-terminus, the 263-residue chain is Putative S-adenosyl-L-methionine-dependent methyltransferase Mjls_0079 (263 aa).

S-adenosyl-L-methionine contacts are provided by residues aspartate 121 and glutamate 150–serine 151.

This sequence belongs to the UPF0677 family.

Its function is as follows. Exhibits S-adenosyl-L-methionine-dependent methyltransferase activity. The protein is Putative S-adenosyl-L-methionine-dependent methyltransferase Mjls_0079 of Mycobacterium sp. (strain JLS).